We begin with the raw amino-acid sequence, 281 residues long: Bifunctional protein FolD (281 aa).

Residues 165–167, Thr192, and Val233 each bind NADP(+); that span reads GRG.

Belongs to the tetrahydrofolate dehydrogenase/cyclohydrolase family. As to quaternary structure, homodimer.

The catalysed reaction is (6R)-5,10-methylene-5,6,7,8-tetrahydrofolate + NADP(+) = (6R)-5,10-methenyltetrahydrofolate + NADPH. The enzyme catalyses (6R)-5,10-methenyltetrahydrofolate + H2O = (6R)-10-formyltetrahydrofolate + H(+). The protein operates within one-carbon metabolism; tetrahydrofolate interconversion. Its function is as follows. Catalyzes the oxidation of 5,10-methylenetetrahydrofolate to 5,10-methenyltetrahydrofolate and then the hydrolysis of 5,10-methenyltetrahydrofolate to 10-formyltetrahydrofolate. This chain is Bifunctional protein FolD, found in Mycobacterium marinum (strain ATCC BAA-535 / M).